The primary structure comprises 108 residues: Iron-sulfur cluster assembly protein CyaY (108 aa).

It belongs to the frataxin family.

Its function is as follows. Involved in iron-sulfur (Fe-S) cluster assembly. May act as a regulator of Fe-S biogenesis. This is Iron-sulfur cluster assembly protein CyaY from Burkholderia ambifaria (strain MC40-6).